Reading from the N-terminus, the 435-residue chain is Serine--tRNA ligase (435 aa).

233-235 (TAE) serves as a coordination point for L-serine. Residue 264-266 (RAE) participates in ATP binding. Glu-287 lines the L-serine pocket. 351-354 (EISS) lines the ATP pocket. An L-serine-binding site is contributed by Ser-386.

The protein belongs to the class-II aminoacyl-tRNA synthetase family. Type-1 seryl-tRNA synthetase subfamily. Homodimer. The tRNA molecule binds across the dimer.

It localises to the cytoplasm. It carries out the reaction tRNA(Ser) + L-serine + ATP = L-seryl-tRNA(Ser) + AMP + diphosphate + H(+). It catalyses the reaction tRNA(Sec) + L-serine + ATP = L-seryl-tRNA(Sec) + AMP + diphosphate + H(+). It participates in aminoacyl-tRNA biosynthesis; selenocysteinyl-tRNA(Sec) biosynthesis; L-seryl-tRNA(Sec) from L-serine and tRNA(Sec): step 1/1. In terms of biological role, catalyzes the attachment of serine to tRNA(Ser). Is also able to aminoacylate tRNA(Sec) with serine, to form the misacylated tRNA L-seryl-tRNA(Sec), which will be further converted into selenocysteinyl-tRNA(Sec). The protein is Serine--tRNA ligase of Anaeromyxobacter dehalogenans (strain 2CP-C).